An 821-amino-acid polypeptide reads, in one-letter code: PX domain-containing protein C1450.12 (821 aa).

In terms of domain architecture, PX spans 171 to 310 (AYVLGVRQST…SFLTDDPVTL (140 aa)). The segment at 235-271 (KDDHDTYLNSSEDSTLSPLPSRSSDTNDPQSDSQHVL) is disordered. Polar residues predominate over residues 241-268 (YLNSSEDSTLSPLPSRSSDTNDPQSDSQ). Phosphothreonine occurs at positions 260 and 597. Acidic residues-rich tracts occupy residues 737 to 746 (GDEDDQDEND) and 754 to 766 (EHME…EEFD). The segment at 737–766 (GDEDDQDENDQVTKVEEEHMEDDDSVEEFD) is disordered. S761 bears the Phosphoserine mark.

It is found in the mitochondrion membrane. The polypeptide is PX domain-containing protein C1450.12 (Schizosaccharomyces pombe (strain 972 / ATCC 24843) (Fission yeast)).